The following is a 2214-amino-acid chain: Genome polyprotein (2214 aa).

Disordered regions lie at residues 1 to 21 (MGAQ…VATG) and 600 to 619 (KPQK…VNSQ). G2 carries N-myristoyl glycine; by host lipidation. Topologically, residues 2–1525 (GAQVSSQKVG…NLNRAMTILQ (1524 aa)) are cytoplasmic. Amphipathic alpha-helix regions lie at residues 580-601 (QGIE…QPKP) and 581-601 (GIEE…QPKP). Positions 606-619 (TAQSTPSTSGVNSQ) are enriched in polar residues. Active-site for protease 2A activity residues include H906 and D924. Positions 941 and 943 each coordinate Zn(2+). C995 acts as the For protease 2A activity in catalysis. Zn(2+) contacts are provided by C1001 and H1003. The tract at residues 1133-1205 (GDSWLKKFTE…HQSCPSQEQQ (73 aa)) is membrane-binding. The tract at residues 1133 to 1271 (GDSWLKKFTE…SPGTGKSIAT (139 aa)) is oligomerization. An RNA-binding region spans residues 1154–1158 (SNKIS). In terms of domain architecture, SF3 helicase spans 1237 to 1393 (ENTINNYIQF…SEHSIKGKLN (157 aa)). 1261–1268 (GSPGTGKS) contacts ATP. Zn(2+) contacts are provided by C1401, C1404, C1413, and C1418. The C4-type zinc-finger motif lies at 1401 to 1418 (CKDCPQPANFKKCCPLVC). Residues 1445–1452 (ERNRRANI) form an RNA-binding region. The interval 1456–1461 (MEALFQ) is oligomerization. Residues 1526 to 1541 (AVTTFAAVAAVVYVMY) lie within the membrane without spanning it. Over 1542 to 2214 (KLFAGHQGAY…TLYRRWLDSF (673 aa)) the chain is Cytoplasmic. Y1551 is subject to O-(5'-phospho-RNA)-tyrosine. The region spanning 1571 to 1749 (GPGFDYAVAM…FAAALKRSYF (179 aa)) is the Peptidase C3 domain. Active-site for protease 3C activity residues include H1610, E1641, and C1717. The RdRp catalytic domain occupies 1980–2095 (EKLFAFDYTG…SYPHEVDASL (116 aa)). Residues D1986 and D2081 each coordinate Mg(2+).

It belongs to the picornaviruses polyprotein family. In terms of assembly, interacts with capsid protein VP1 and capsid protein VP3 to form heterotrimeric protomers. As to quaternary structure, interacts with capsid protein VP0, and capsid protein VP3 to form heterotrimeric protomers. Five protomers subsequently associate to form pentamers which serve as building blocks for the capsid. Interacts with capsid protein VP2, capsid protein VP3 and capsid protein VP4 following cleavage of capsid protein VP0. Interacts with capsid protein VP1 and capsid protein VP3 in the mature capsid. In terms of assembly, interacts with capsid protein VP0 and capsid protein VP1 to form heterotrimeric protomers. Five protomers subsequently associate to form pentamers which serve as building blocks for the capsid. Interacts with capsid protein VP4 in the mature capsid. Interacts with protein 2C; this interaction may be important for virion morphogenesis. As to quaternary structure, interacts with capsid protein VP1 and capsid protein VP3. Homodimer. In terms of assembly, homohexamer; forms a hexameric ring structure with 6-fold symmetry characteristic of AAA+ ATPases. Interacts (via N-terminus) with host RTN3 (via reticulon domain); this interaction is important for viral replication. Interacts with capsid protein VP3; this interaction may be important for virion morphogenesis. As to quaternary structure, interacts with protein 3CD. Homodimer. Interacts with host GBF1. Interacts (via GOLD domain) with host ACBD3 (via GOLD domain); this interaction allows the formation of a viral protein 3A/ACBD3 heterotetramer with a 2:2 stoichiometry, which will stimulate the recruitment of host PI4KB in order to synthesize PI4P at the viral RNA replication sites. In terms of assembly, interacts with RNA-directed RNA polymerase. As to quaternary structure, interacts with protein 3AB and with RNA-directed RNA polymerase. Interacts with Viral protein genome-linked and with protein 3CD. Mg(2+) serves as cofactor. In terms of processing, specific enzymatic cleavages in vivo by the viral proteases yield processing intermediates and the mature proteins. Post-translationally, myristoylation is required for the formation of pentamers during virus assembly. Further assembly of 12 pentamers and a molecule of genomic RNA generates the provirion. During virion maturation, immature virions are rendered infectious following cleavage of VP0 into VP4 and VP2. This maturation seems to be an autocatalytic event triggered by the presence of RNA in the capsid and it is followed by a conformational change infectious virion. In terms of processing, myristoylation is required during RNA encapsidation and formation of the mature virus particle. Post-translationally, VPg is uridylylated by the polymerase into VPg-pUpU. This acts as a nucleotide-peptide primer for the genomic RNA replication.

The protein localises to the virion. It localises to the host cytoplasm. The protein resides in the host cytoplasmic vesicle membrane. It is found in the host nucleus. The enzyme catalyses a ribonucleoside 5'-triphosphate + H2O = a ribonucleoside 5'-diphosphate + phosphate + H(+). It carries out the reaction Selective cleavage of Tyr-|-Gly bond in the picornavirus polyprotein.. The catalysed reaction is RNA(n) + a ribonucleoside 5'-triphosphate = RNA(n+1) + diphosphate. It catalyses the reaction Selective cleavage of Gln-|-Gly bond in the poliovirus polyprotein. In other picornavirus reactions Glu may be substituted for Gln, and Ser or Thr for Gly.. With respect to regulation, replication or transcription is subject to high level of random mutations by the nucleotide analog ribavirin. In terms of biological role, forms an icosahedral capsid of pseudo T=3 symmetry with capsid proteins VP2 and VP3. The capsid is 300 Angstroms in diameter, composed of 60 copies of each capsid protein and enclosing the viral positive strand RNA genome. Capsid protein VP1 mainly forms the vertices of the capsid. Capsid protein VP1 interacts with host cell receptor to provide virion attachment to target host cells. This attachment induces virion internalization. Tyrosine kinases are probably involved in the entry process. After binding to its receptor, the capsid undergoes conformational changes. Capsid protein VP1 N-terminus (that contains an amphipathic alpha-helix) and capsid protein VP4 are externalized. Together, they shape a pore in the host membrane through which viral genome is translocated to host cell cytoplasm. Forms an icosahedral capsid of pseudo T=3 symmetry with capsid proteins VP2 and VP3. The capsid is 300 Angstroms in diameter, composed of 60 copies of each capsid protein and enclosing the viral positive strand RNA genome. Its function is as follows. Lies on the inner surface of the capsid shell. After binding to the host receptor, the capsid undergoes conformational changes. Capsid protein VP4 is released, Capsid protein VP1 N-terminus is externalized, and together, they shape a pore in the host membrane through which the viral genome is translocated into the host cell cytoplasm. Functionally, component of immature procapsids, which is cleaved into capsid proteins VP4 and VP2 after maturation. Allows the capsid to remain inactive before the maturation step. In terms of biological role, cysteine protease that cleaves viral polyprotein and specific host proteins. It is responsible for the autocatalytic cleavage between the P1 and P2 regions, which is the first cleavage occurring in the polyprotein. Also cleaves the host translation initiation factor EIF4G1, in order to shut down the capped cellular mRNA translation. Inhibits the host nucleus-cytoplasm protein and RNA trafficking by cleaving host members of the nuclear pores. Counteracts stress granule formation probably by antagonizing its assembly or promoting its dissassembly. Cleaves and inhibits host IFIH1/MDA5, thereby inhibiting the type-I IFN production and the establishment of the antiviral state. Cleaves and inhibits host MAVS, thereby inhibiting the type-I IFN production and the establishment of the antiviral state. Plays an essential role in the virus replication cycle by acting as a viroporin. Creates a pore in the host endoplasmic reticulum and as a consequence releases Ca2+ in the cytoplasm of infected cell. In turn, high levels of cytoplasmic calcium may trigger membrane trafficking and transport of viral ER-associated proteins to viroplasms, sites of viral genome replication. Its function is as follows. Induces and associates with structural rearrangements of intracellular membranes. Displays RNA-binding, nucleotide binding and NTPase activities. May play a role in virion morphogenesis and viral RNA encapsidation by interacting with the capsid protein VP3. Functionally, localizes the viral replication complex to the surface of membranous vesicles. Together with protein 3CD binds the Cis-Active RNA Element (CRE) which is involved in RNA synthesis initiation. Acts as a cofactor to stimulate the activity of 3D polymerase, maybe through a nucleid acid chaperone activity. In terms of biological role, localizes the viral replication complex to the surface of membranous vesicles. It inhibits host cell endoplasmic reticulum-to-Golgi apparatus transport and causes the disassembly of the Golgi complex, possibly through GBF1 interaction. This would result in depletion of MHC, trail receptors and IFN receptors at the host cell surface. Plays an essential role in viral RNA replication by recruiting ACBD3 and PI4KB at the viral replication sites, thereby allowing the formation of the rearranged membranous structures where viral replication takes place. Acts as a primer for viral RNA replication and remains covalently bound to viral genomic RNA. VPg is uridylylated prior to priming replication into VPg-pUpU. The oriI viral genomic sequence may act as a template for this. The VPg-pUpU is then used as primer on the genomic RNA poly(A) by the RNA-dependent RNA polymerase to replicate the viral genome. During genome replication, the VPg-RNA linkage is removed by the host TDP2, thereby accelerating replication. During the late stage of the replication cycle, host TDP2 is excluded from sites of viral RNA synthesis and encapsidation, allowing for the generation of progeny virions. Its function is as follows. Involved in the viral replication complex and viral polypeptide maturation. It exhibits protease activity with a specificity and catalytic efficiency that is different from protease 3C. Protein 3CD lacks polymerase activity. Protein 3CD binds to the 5'UTR of the viral genome. Functionally, replicates the viral genomic RNA on the surface of intracellular membranes. May form linear arrays of subunits that propagate along a strong head-to-tail interaction called interface-I. Covalently attaches UMP to a tyrosine of VPg, which is used to prime RNA synthesis. The positive stranded RNA genome is first replicated at virus induced membranous vesicles, creating a dsRNA genomic replication form. This dsRNA is then used as template to synthesize positive stranded RNA genomes. ss(+)RNA genomes are either translated, replicated or encapsidated. In terms of biological role, major viral protease that mediates proteolytic processing of the polyprotein. Cleaves host EIF5B, contributing to host translation shutoff. Also cleaves host PABPC1, contributing to host translation shutoff. Cleaves host NLRP1, triggers host N-glycine-mediated degradation of the autoinhibitory NLRP1 N-terminal fragment. The sequence is that of Genome polyprotein from Coxsackievirus A24 (strain EH24/70).